Here is a 510-residue protein sequence, read N- to C-terminus: MKIEKSQRNLEIDRSRKNDFLYPLIFREYIYTFAHDRDLNRSILLENVSYDNKYSLLIVKRLITRMYQQNHLIISANDSNQNTFFRYNKNLYFQMISEGFAVIVEIPFSLRLVSSLERSEIVKSHNLRSIHSIFPFLEGKFPHLNYLSEGLIPYPIHLEKLVQILRYWVKDPSSLHLLRLFLHEYWNLNSLIIPKKSISFFVKKNQRFFLFLYNSHVYEYESVFFFLCKQSFHFRLTFYQVFLERIDFYGKIEHFVEVFTKDWGDSLCLLKDPFIHYIRYQGKSIFVSKDTPLLMKKWKYYLVNLCQCHFDVCFQPQKIHINPFSLYKHSFALLGYLSSSSVRLNLSVVRSQMLENAFLMDNIMNKLDTTVSIIPLIGSLAKMKFCNAVGHPISKPTWADFSDSDIIDRFVRICRNLSHYYSGSSRKKSLYRIKYILRLSCVKTLARKHKSTVRIFLKRLGSELLEEFFTEEEQIIFLIFPRASSISQKLYRGRVWYLDIICINELSNHE.

The protein belongs to the intron maturase 2 family. MatK subfamily.

The protein localises to the plastid. It localises to the chloroplast. Usually encoded in the trnK tRNA gene intron. Probably assists in splicing its own and other chloroplast group II introns. The chain is Maturase K from Populus nigra (Lombardy poplar).